A 201-amino-acid polypeptide reads, in one-letter code: Akirin (201 aa).

The interval 1–133 (MACATLKRAL…PRRPDSPQNL (133 aa)) is disordered. The Nuclear localization signal motif lies at 20 to 25 (PKRRRC). Phosphoserine is present on residues Ser-39 and Ser-41. Composition is skewed to polar residues over residues 44 to 57 (GPSTSAGLPHTPSN) and 65 to 75 (EPSPFSESSLA). The residue at position 67 (Ser-67) is a Phosphoserine. Low complexity predominate over residues 112–122 (SESSGSEMGPE). Phosphoserine is present on residues Ser-123 and Ser-129.

This sequence belongs to the akirin family. As to quaternary structure, interacts with dmap1. Interacts with bap60 and rel; interaction is immune stimulation-dependent; activates selected rel target gene promoters. Interacts with bap55; interaction is immune stimulation-dependent. Interacts with twi. In terms of processing, polyubiquitinated via 'Lys-63'-linked ubiquitin by Hyd, promoting interaction with rel. As to expression, ubiquitous.

The protein localises to the nucleus. In terms of biological role, molecular adapter that acts as a bridge between a variety of multiprotein complexes, and which is required for embryonic development and for normal innate immune response. Acts as a regulator of embryonic myogenesis by bridging Twist (twi) with the SWI/SNF-like Brahma complex, promoting expression of twi-regulated genes during myogenesis. Effector of immune deficiency pathway (Imd) by acting either downstream of, or at the level of, the NF-kappa-B factor Relish (Rel). Acts by bridging the NF-kappa-B factor Rel and the Brahma complex through bap60 interaction, leading to activation a subset of NF-kappa-B factor Relish (Rel) effector genes. Not part of the Toll pathway. Required for the formation of the heart by promoting expression ot tinman (tin). The protein is Akirin of Drosophila melanogaster (Fruit fly).